Reading from the N-terminus, the 682-residue chain is Methionine--tRNA ligase (682 aa).

The short motif at 15-25 (PYANGAIHLGH) is the 'HIGH' region element. 4 residues coordinate Zn(2+): cysteine 146, cysteine 149, cysteine 159, and cysteine 162. A 'KMSKS' region motif is present at residues 331 to 335 (KMSKS). Residue lysine 334 coordinates ATP. Residues 580-682 (DFAKLDLRVA…QGVKPGMQVK (103 aa)) enclose the tRNA-binding domain.

It belongs to the class-I aminoacyl-tRNA synthetase family. MetG type 1 subfamily. Homodimer. The cofactor is Zn(2+).

The protein localises to the cytoplasm. The catalysed reaction is tRNA(Met) + L-methionine + ATP = L-methionyl-tRNA(Met) + AMP + diphosphate. Is required not only for elongation of protein synthesis but also for the initiation of all mRNA translation through initiator tRNA(fMet) aminoacylation. This Pasteurella multocida (strain Pm70) protein is Methionine--tRNA ligase.